The chain runs to 1662 residues: Cortactin-binding protein 2 (1662 aa).

5 disordered regions span residues 1 to 23 (MATD…AGAA), 203 to 222 (KKKT…RSTE), 361 to 440 (SHSD…LHPG), 454 to 479 (GNAN…PTSR), and 498 to 618 (RFTS…PSID). Positions 119–276 (KKMQERMSAQ…EQLKRGSDSK (158 aa)) form a coiled coil. Over residues 386–396 (PSTDSTPDPTS) the composition is skewed to low complexity. The segment covering 411 to 422 (QTPGIAPQNSQA) has biased composition (polar residues). Residue Arg-498 is modified to Asymmetric dimethylarginine. Positions 583 to 597 (TVASPPSSLPQGNRV) are enriched in polar residues. ANK repeat units lie at residues 709 to 739 (GRPT…DINY), 743 to 772 (DGHS…QINA), 776 to 805 (NGFT…NINH), 809 to 838 (GGQT…NRSV), 842 to 871 (DGWT…PACG), and 912 to 942 (EGWT…EPER). The tract at residues 1450–1474 (GESGAWRKVNTSPRRKSGRFSLPTW) is disordered. Ser-1524 is subject to Phosphoserine. 2 disordered regions span residues 1580-1602 (SQKE…KSKT) and 1618-1662 (SKVT…KPNK). The span at 1582 to 1599 (KEVSPLSSHQTTECSNSK) shows a compositional bias: polar residues. A compositionally biased stretch (low complexity) spans 1624-1638 (SQNTKRSSSSSNTRQ). Residues 1639 to 1648 (IEINNNSKEN) show a composition bias toward polar residues. Basic and acidic residues predominate over residues 1649–1662 (WNLHKNEHLDKPNK).

In terms of assembly, interacts with CTTN/cortactin SH3 domain. Interacts with STRN, STRN4/zinedin and MOB4/phocein; this interactions mediate the association with the STRIPAK core complex and may regulate dendritic spine distribution of the STRIPAK complex in hippocampal neurons. Activation of glutamate receptors weakens the interaction with STRN and STRN4.

Its subcellular location is the cytoplasm. The protein resides in the cell cortex. It is found in the cell projection. The protein localises to the dendritic spine. Regulates the dendritic spine distribution of CTTN/cortactin in hippocampal neurons, and thus controls dendritic spinogenesis and dendritic spine maintenance. Associates with the striatin-interacting phosphatase and kinase (STRIPAK) core complex to regulate dendritic spine distribution of the STRIPAK complex in hippocampal neurons. The polypeptide is Cortactin-binding protein 2 (CTTNBP2) (Chlorocebus aethiops (Green monkey)).